Consider the following 122-residue polypeptide: Large ribosomal subunit protein uL18 (122 aa).

Belongs to the universal ribosomal protein uL18 family. Part of the 50S ribosomal subunit; part of the 5S rRNA/L5/L18/L25 subcomplex. Contacts the 5S and 23S rRNAs.

In terms of biological role, this is one of the proteins that bind and probably mediate the attachment of the 5S RNA into the large ribosomal subunit, where it forms part of the central protuberance. The polypeptide is Large ribosomal subunit protein uL18 (Ruminiclostridium cellulolyticum (strain ATCC 35319 / DSM 5812 / JCM 6584 / H10) (Clostridium cellulolyticum)).